Consider the following 397-residue polypeptide: MAKAKFERTKPHVNIGTIGHIDHGKTTLTAAITKVLHDKYPDLNAASAFDQIDKAPEERQRGITISIAHVEYQTEARHYAHVDCPGHADYIKNMITGAAQMDGAILVVAATDGPMPQTKEHVLLARQVGVPYIVVALNKADMVDDEEILELVELEVRELLSEYDFPGDDLPVVQVSALKALEGDKEWGDKLLGLMDAVDEAIPTPPRDTDKPFLMPVEDVFTITGRGTVVTGRIERGVLKVNETVDIIGIKTEKTTTTVTGIEMFRKLLDEGQAGENVGLLLRGIKREDVERGQVIIKPGSVTPHTEFEAAAYILSKDEGGRHTPFFNNYRPQFYFRTTDVTGVVTLPEGTEMVMPGDNTDMTVALIQPVAMEEGLKFAIREGGRTVGAGQVTKITK.

The region spanning 10 to 206 (KPHVNIGTIG…AVDEAIPTPP (197 aa)) is the tr-type G domain. Residues 19–26 (GHIDHGKT) are G1. 19 to 26 (GHIDHGKT) provides a ligand contact to GTP. Thr26 contacts Mg(2+). Residues 62–66 (GITIS) are G2. The tract at residues 83–86 (DCPG) is G3. Residues 83 to 87 (DCPGH) and 138 to 141 (NKAD) each bind GTP. The segment at 138-141 (NKAD) is G4. Positions 176–178 (SAL) are G5.

This sequence belongs to the TRAFAC class translation factor GTPase superfamily. Classic translation factor GTPase family. EF-Tu/EF-1A subfamily. Monomer.

It is found in the cytoplasm. The catalysed reaction is GTP + H2O = GDP + phosphate + H(+). Its function is as follows. GTP hydrolase that promotes the GTP-dependent binding of aminoacyl-tRNA to the A-site of ribosomes during protein biosynthesis. In Kitasatospora aureofaciens (Streptomyces aureofaciens), this protein is Elongation factor Tu.